A 232-amino-acid polypeptide reads, in one-letter code: Phosphatidylserine decarboxylase proenzyme (232 aa).

Ser190 (schiff-base intermediate with substrate; via pyruvic acid) is an active-site residue. Ser190 carries the post-translational modification Pyruvic acid (Ser); by autocatalysis.

The protein belongs to the phosphatidylserine decarboxylase family. PSD-A subfamily. As to quaternary structure, heterodimer of a large membrane-associated beta subunit and a small pyruvoyl-containing alpha subunit. Requires pyruvate as cofactor. In terms of processing, is synthesized initially as an inactive proenzyme. Formation of the active enzyme involves a self-maturation process in which the active site pyruvoyl group is generated from an internal serine residue via an autocatalytic post-translational modification. Two non-identical subunits are generated from the proenzyme in this reaction, and the pyruvate is formed at the N-terminus of the alpha chain, which is derived from the carboxyl end of the proenzyme. The post-translation cleavage follows an unusual pathway, termed non-hydrolytic serinolysis, in which the side chain hydroxyl group of the serine supplies its oxygen atom to form the C-terminus of the beta chain, while the remainder of the serine residue undergoes an oxidative deamination to produce ammonia and the pyruvoyl prosthetic group on the alpha chain.

It is found in the cell membrane. The catalysed reaction is a 1,2-diacyl-sn-glycero-3-phospho-L-serine + H(+) = a 1,2-diacyl-sn-glycero-3-phosphoethanolamine + CO2. It functions in the pathway phospholipid metabolism; phosphatidylethanolamine biosynthesis; phosphatidylethanolamine from CDP-diacylglycerol: step 2/2. In terms of biological role, catalyzes the formation of phosphatidylethanolamine (PtdEtn) from phosphatidylserine (PtdSer). The sequence is that of Phosphatidylserine decarboxylase proenzyme from Brucella abortus (strain S19).